The chain runs to 195 residues: ATP-dependent Clp protease proteolytic subunit (195 aa).

Ser-98 (nucleophile) is an active-site residue. His-123 is an active-site residue.

The protein belongs to the peptidase S14 family. Fourteen ClpP subunits assemble into 2 heptameric rings which stack back to back to give a disk-like structure with a central cavity, resembling the structure of eukaryotic proteasomes.

It localises to the cytoplasm. The enzyme catalyses Hydrolysis of proteins to small peptides in the presence of ATP and magnesium. alpha-casein is the usual test substrate. In the absence of ATP, only oligopeptides shorter than five residues are hydrolyzed (such as succinyl-Leu-Tyr-|-NHMec, and Leu-Tyr-Leu-|-Tyr-Trp, in which cleavage of the -Tyr-|-Leu- and -Tyr-|-Trp bonds also occurs).. Cleaves peptides in various proteins in a process that requires ATP hydrolysis. Has a chymotrypsin-like activity. Plays a major role in the degradation of misfolded proteins. The protein is ATP-dependent Clp protease proteolytic subunit of Helicobacter pylori (strain G27).